The chain runs to 109 residues: Probable glutaredoxin slr1562 (109 aa).

Residues 11-109 (LSGRQADGIK…PLLATPPNPA (99 aa)) enclose the Glutaredoxin domain. Cys31 and Cys34 form a disulfide bridge.

It belongs to the glutaredoxin family.

Has a glutathione-disulfide oxidoreductase activity in the presence of NADPH and glutathione reductase. Reduces low molecular weight disulfides and proteins. The sequence is that of Probable glutaredoxin slr1562 from Synechocystis sp. (strain ATCC 27184 / PCC 6803 / Kazusa).